We begin with the raw amino-acid sequence, 304 residues long: Acetyl-coenzyme A carboxylase carboxyl transferase subunit beta (304 aa).

The CoA carboxyltransferase N-terminal domain occupies 23 to 292 (VWTKCDSCGQ…PNPEAPREGV (270 aa)). Positions 27, 30, 46, and 49 each coordinate Zn(2+). The segment at 27–49 (CDSCGQVLYRAELERNLEVCPKC) adopts a C4-type zinc-finger fold. Residues 284–304 (NPEAPREGVVVPPVPDQEPEA) are disordered. Positions 295–304 (PPVPDQEPEA) are enriched in pro residues.

Belongs to the AccD/PCCB family. Acetyl-CoA carboxylase is a heterohexamer composed of biotin carboxyl carrier protein (AccB), biotin carboxylase (AccC) and two subunits each of ACCase subunit alpha (AccA) and ACCase subunit beta (AccD). Zn(2+) serves as cofactor.

The protein resides in the cytoplasm. It catalyses the reaction N(6)-carboxybiotinyl-L-lysyl-[protein] + acetyl-CoA = N(6)-biotinyl-L-lysyl-[protein] + malonyl-CoA. It participates in lipid metabolism; malonyl-CoA biosynthesis; malonyl-CoA from acetyl-CoA: step 1/1. Component of the acetyl coenzyme A carboxylase (ACC) complex. Biotin carboxylase (BC) catalyzes the carboxylation of biotin on its carrier protein (BCCP) and then the CO(2) group is transferred by the transcarboxylase to acetyl-CoA to form malonyl-CoA. This Escherichia coli O139:H28 (strain E24377A / ETEC) protein is Acetyl-coenzyme A carboxylase carboxyl transferase subunit beta.